The sequence spans 332 residues: Aspartate carbamoyltransferase catalytic subunit (332 aa).

Residues Arg54 and Thr55 each coordinate carbamoyl phosphate. Position 82 (Lys82) interacts with L-aspartate. The carbamoyl phosphate site is built by Arg104, His134, and Gln137. Residues Arg175 and Arg230 each contribute to the L-aspartate site. Positions 271 and 272 each coordinate carbamoyl phosphate. The tract at residues 312 to 332 (GGPDGDSTTSPGSGPEGGTTP) is disordered.

This sequence belongs to the aspartate/ornithine carbamoyltransferase superfamily. ATCase family. As to quaternary structure, heterododecamer (2C3:3R2) of six catalytic PyrB chains organized as two trimers (C3), and six regulatory PyrI chains organized as three dimers (R2).

It carries out the reaction carbamoyl phosphate + L-aspartate = N-carbamoyl-L-aspartate + phosphate + H(+). It participates in pyrimidine metabolism; UMP biosynthesis via de novo pathway; (S)-dihydroorotate from bicarbonate: step 2/3. Functionally, catalyzes the condensation of carbamoyl phosphate and aspartate to form carbamoyl aspartate and inorganic phosphate, the committed step in the de novo pyrimidine nucleotide biosynthesis pathway. In Beutenbergia cavernae (strain ATCC BAA-8 / DSM 12333 / CCUG 43141 / JCM 11478 / NBRC 16432 / NCIMB 13614 / HKI 0122), this protein is Aspartate carbamoyltransferase catalytic subunit.